Consider the following 1221-residue polypeptide: Transcription initiation factor TFIID subunit 2 (1221 aa).

The segment at 845-1213 is binds to Tbp and Taf1; that stretch reads EKHLPSYKYM…LSSEDSSNSN (369 aa). 2 disordered regions span residues 1011 to 1044 and 1111 to 1221; these read VGSV…ERQK and KNEM…MNLN. The segment covering 1027–1037 has biased composition (polar residues); that stretch reads HLPTPTNTLDN. Positions 1129–1144 are enriched in basic and acidic residues; the sequence is DSTRYESSHEEGKLKS. A phosphoserine mark is found at serine 1135 and serine 1136. Positions 1138-1183 are highly charged; that stretch reads EEGKLKSGDGGLKKKKKKEKKKHKHKHKHRHSKDKDKDKDKERKDK. Residues 1150 to 1169 show a composition bias toward basic residues; the sequence is KKKKKKEKKKHKHKHKHRHS. Basic and acidic residues predominate over residues 1170 to 1190; that stretch reads KDKDKDKDKERKDKDKRDPHI. A compositionally biased stretch (low complexity) spans 1206–1221; sequence SEDSSNSNSLPPMNLN.

The protein belongs to the TAF2 family. As to quaternary structure, belongs to the TFIID complex which is composed of TATA binding protein (Tbp) and a number of TBP-associated factors (TAFs). Interacts with Tbp, Taf1, Taf11 and Taf12.

The protein localises to the nucleus. Functionally, TFIID is a multimeric protein complex that plays a central role in mediating promoter responses to various activators and repressors. An essential subunit binds to core promoter DNA. This is Transcription initiation factor TFIID subunit 2 (Taf2) from Drosophila melanogaster (Fruit fly).